The primary structure comprises 89 residues: Small ribosomal subunit protein uS15 (89 aa).

Belongs to the universal ribosomal protein uS15 family. Part of the 30S ribosomal subunit. Forms a bridge to the 50S subunit in the 70S ribosome, contacting the 23S rRNA.

Its function is as follows. One of the primary rRNA binding proteins, it binds directly to 16S rRNA where it helps nucleate assembly of the platform of the 30S subunit by binding and bridging several RNA helices of the 16S rRNA. Functionally, forms an intersubunit bridge (bridge B4) with the 23S rRNA of the 50S subunit in the ribosome. This Saccharophagus degradans (strain 2-40 / ATCC 43961 / DSM 17024) protein is Small ribosomal subunit protein uS15.